We begin with the raw amino-acid sequence, 721 residues long: uncharacterized protein (721 aa).

Residues Q6–L26 traverse the membrane as a helical segment. G308–T315 is a binding site for ATP.

Belongs to the GSP E family. In terms of processing, this protein undergoes a protein self splicing that involves a post-translational excision of the intervening region (intein) followed by peptide ligation.

It localises to the membrane. This is an uncharacterized protein from Methanocaldococcus jannaschii (strain ATCC 43067 / DSM 2661 / JAL-1 / JCM 10045 / NBRC 100440) (Methanococcus jannaschii).